Reading from the N-terminus, the 332-residue chain is RING finger protein 225 (332 aa).

The tract at residues 1–55 is disordered; sequence MPCPRLPWLRRHRTSQGSGPSSPSTVSAPNSPSRGEDEDAEEEEGDGTPGSGPIL. The segment covering 15–27 has biased composition (low complexity); that stretch reads SQGSGPSSPSTVS. The span at 36-46 shows a compositional bias: acidic residues; the sequence is EDEDAEEEEGD. The RING-type zinc finger occupies 63–111; it reads CLICVSPFDGIFKLPKRLDCGHVFCLECLARLSLATAGGGDAVACPMCR. Positions 121 to 187 are disordered; it reads GLPALPTQPG…PPPLRLGRPL (67 aa). Residues 205-225 form a helical membrane-spanning segment; the sequence is ALAVLVAAGLVVSGVYIFFLI. The interval 259-332 is disordered; that stretch reads THAWTRRPTK…ADGKKVQLQQ (74 aa). Composition is skewed to basic and acidic residues over residues 280-295 and 323-332; these read ATKD…KDPV and ADGKKVQLQQ.

It is found in the membrane. The protein is RING finger protein 225 of Mus musculus (Mouse).